The following is a 298-amino-acid chain: Mitochondrial nicotinamide adenine dinucleotide transporter SLC25A51 (298 aa).

Residues 1–11 (MMDSEAHEKRP) show a composition bias toward basic and acidic residues. The segment at 1–21 (MMDSEAHEKRPPMLTSSNQDL) is disordered. Solcar repeat units follow at residues 28–108 (VGDM…LSRL), 117–201 (PEFA…IKES), and 214–297 (NDFI…LLKI). 6 consecutive transmembrane segments (helical) span residues 36-56 (CGYC…KILF), 85-105 (LPPL…YEDL), 119-139 (FATR…LTPF), 180-200 (ILFR…PIKE), 216-236 (FICG…INVV), and 269-290 (LFRG…INAT).

This sequence belongs to the mitochondrial carrier (TC 2.A.29) family.

The protein resides in the mitochondrion inner membrane. It catalyses the reaction NAD(+)(in) = NAD(+)(out). In terms of biological role, mitochondrial membrane carrier protein that mediates the import of NAD(+) into mitochondria. Mitochondrial NAD(+) is required for glycolysis and mitochondrial respiration. Compared to SLC25A52, SLC25A51-mediated transport is essential for the import of NAD(+) in mitochondria. The transport mechanism, uniport or antiport, its electrogenicity and substrate selectivity, remain to be elucidated. In Mus musculus (Mouse), this protein is Mitochondrial nicotinamide adenine dinucleotide transporter SLC25A51.